The following is a 527-amino-acid chain: Exodeoxyribonuclease 7 large subunit (527 aa).

Positions 499-527 (AGEEGAPPPAAPKKRASRPVVPTKQGSLF) are disordered.

The protein belongs to the XseA family. In terms of assembly, heterooligomer composed of large and small subunits.

It is found in the cytoplasm. The enzyme catalyses Exonucleolytic cleavage in either 5'- to 3'- or 3'- to 5'-direction to yield nucleoside 5'-phosphates.. Bidirectionally degrades single-stranded DNA into large acid-insoluble oligonucleotides, which are then degraded further into small acid-soluble oligonucleotides. This Sinorhizobium fredii (strain NBRC 101917 / NGR234) protein is Exodeoxyribonuclease 7 large subunit.